The chain runs to 267 residues: MARDRRDTYYWRAKDEGYRSRAAYKLFQINEKHEVIKEDDTIVDLGAAPGGWLEVAKKISGGKIVGVDLRRIKEIEGVETIKGDITSDETIKKIIELVGEGGADVVICDAAPNLSGNWSLDHARSIDLTTSALECAKKILKPKGHFIVKVFQGDMFKEYMDKVRESFTYTRAFSPKASRPESAEIYVIGKKLLTAPLKIDDKFDVTIKKIGAKGNGIAFVEDFVVFMQDEVKKGENVRIKIVDVKPEFAFAIVIGRYDEELNEKNEE.

Residues Gly50, Trp52, Asp68, Asp84, and Asp109 each coordinate S-adenosyl-L-methionine. Catalysis depends on Lys149, which acts as the Proton acceptor. In terms of domain architecture, TRAM spans 196–255 (PLKIDDKFDVTIKKIGAKGNGIAFVEDFVVFMQDEVKKGENVRIKIVDVKPEFAFAIVIG).

The protein belongs to the class I-like SAM-binding methyltransferase superfamily. RNA methyltransferase RlmE family.

It is found in the cytoplasm. The catalysed reaction is uridine(2552) in 23S rRNA + S-adenosyl-L-methionine = 2'-O-methyluridine(2552) in 23S rRNA + S-adenosyl-L-homocysteine + H(+). Its function is as follows. Specifically methylates the uridine in position 2552 of 23S rRNA at the 2'-O position of the ribose in the fully assembled 50S ribosomal subunit. In Methanococcoides burtonii (strain DSM 6242 / NBRC 107633 / OCM 468 / ACE-M), this protein is Ribosomal RNA large subunit methyltransferase E.